Reading from the N-terminus, the 495-residue chain is Leucine aminopeptidase 2 (495 aa).

Positions methionine 1–glycine 21 are cleaved as a signal peptide. One can recognise a PA domain in the interval proline 124–valine 218. 2 N-linked (GlcNAc...) asparagine glycosylation sites follow: asparagine 142 and asparagine 235. Positions 259 and 271 each coordinate Zn(2+). Asparagine 272 carries an N-linked (GlcNAc...) asparagine glycan. Catalysis depends on glutamate 303, which acts as the Proton acceptor. Residues glutamate 304 and aspartate 332 each coordinate Zn(2+). N-linked (GlcNAc...) asparagine glycosylation occurs at asparagine 352. Histidine 430 is a Zn(2+) binding site.

This sequence belongs to the peptidase M28 family. M28A subfamily. In terms of assembly, monomer. It depends on Zn(2+) as a cofactor.

The protein localises to the secreted. Extracellular aminopeptidase that releases a wide variety of amino acids from natural peptides and contributes to pathogenicity. The sequence is that of Leucine aminopeptidase 2 (LAP2) from Trichophyton tonsurans (Scalp ringworm fungus).